Consider the following 399-residue polypeptide: Tryptophan synthase beta chain (399 aa).

Lysine 92 bears the N6-(pyridoxal phosphate)lysine mark.

It belongs to the TrpB family. Tetramer of two alpha and two beta chains. Pyridoxal 5'-phosphate is required as a cofactor.

It carries out the reaction (1S,2R)-1-C-(indol-3-yl)glycerol 3-phosphate + L-serine = D-glyceraldehyde 3-phosphate + L-tryptophan + H2O. It functions in the pathway amino-acid biosynthesis; L-tryptophan biosynthesis; L-tryptophan from chorismate: step 5/5. Its function is as follows. The beta subunit is responsible for the synthesis of L-tryptophan from indole and L-serine. The polypeptide is Tryptophan synthase beta chain (Legionella pneumophila (strain Corby)).